Consider the following 457-residue polypeptide: Siroheme synthase (457 aa).

The interval 1-204 is precorrin-2 dehydrogenase /sirohydrochlorin ferrochelatase; the sequence is MDHLPIFCQL…NDQKAITETT (204 aa). Residues 22-23 and 43-44 contribute to the NAD(+) site; these read DV and LA. Position 128 is a phosphoserine (Ser-128). Positions 216-457 are uroporphyrinogen-III C-methyltransferase; it reads GEVVLVGAGP…RDKLNWFSNH (242 aa). Pro-225 is an S-adenosyl-L-methionine binding site. The active-site Proton acceptor is the Asp-248. Lys-270 (proton donor) is an active-site residue. Residues 301–303, Ile-306, 331–332, Met-382, and Gly-411 contribute to the S-adenosyl-L-methionine site; these read GGD and TA.

In the N-terminal section; belongs to the precorrin-2 dehydrogenase / sirohydrochlorin ferrochelatase family. It in the C-terminal section; belongs to the precorrin methyltransferase family.

It catalyses the reaction uroporphyrinogen III + 2 S-adenosyl-L-methionine = precorrin-2 + 2 S-adenosyl-L-homocysteine + H(+). The catalysed reaction is precorrin-2 + NAD(+) = sirohydrochlorin + NADH + 2 H(+). The enzyme catalyses siroheme + 2 H(+) = sirohydrochlorin + Fe(2+). Its pathway is cofactor biosynthesis; adenosylcobalamin biosynthesis; precorrin-2 from uroporphyrinogen III: step 1/1. It participates in cofactor biosynthesis; adenosylcobalamin biosynthesis; sirohydrochlorin from precorrin-2: step 1/1. The protein operates within porphyrin-containing compound metabolism; siroheme biosynthesis; precorrin-2 from uroporphyrinogen III: step 1/1. It functions in the pathway porphyrin-containing compound metabolism; siroheme biosynthesis; siroheme from sirohydrochlorin: step 1/1. Its pathway is porphyrin-containing compound metabolism; siroheme biosynthesis; sirohydrochlorin from precorrin-2: step 1/1. Functionally, multifunctional enzyme that catalyzes the SAM-dependent methylations of uroporphyrinogen III at position C-2 and C-7 to form precorrin-2 via precorrin-1. Then it catalyzes the NAD-dependent ring dehydrogenation of precorrin-2 to yield sirohydrochlorin. Finally, it catalyzes the ferrochelation of sirohydrochlorin to yield siroheme. This Escherichia coli O45:K1 (strain S88 / ExPEC) protein is Siroheme synthase.